The following is a 341-amino-acid chain: Holliday junction branch migration complex subunit RuvB (341 aa).

Positions 4-185 (TDRLIVPTAV…FGIVARLEFY (182 aa)) are large ATPase domain (RuvB-L). Residues leucine 24, arginine 25, glycine 66, lysine 69, threonine 70, threonine 71, 132–134 (EDF), arginine 175, tyrosine 185, and arginine 222 contribute to the ATP site. Residue threonine 70 coordinates Mg(2+). The interval 186–256 (SAEELGYIVH…VADAALVMLD (71 aa)) is small ATPAse domain (RuvB-S). Positions 259–341 (RAGLDVMDRK…ATPASDAELF (83 aa)) are head domain (RuvB-H). Residues arginine 295, arginine 314, and arginine 319 each contribute to the DNA site.

Belongs to the RuvB family. As to quaternary structure, homohexamer. Forms an RuvA(8)-RuvB(12)-Holliday junction (HJ) complex. HJ DNA is sandwiched between 2 RuvA tetramers; dsDNA enters through RuvA and exits via RuvB. An RuvB hexamer assembles on each DNA strand where it exits the tetramer. Each RuvB hexamer is contacted by two RuvA subunits (via domain III) on 2 adjacent RuvB subunits; this complex drives branch migration. In the full resolvosome a probable DNA-RuvA(4)-RuvB(12)-RuvC(2) complex forms which resolves the HJ.

It is found in the cytoplasm. It catalyses the reaction ATP + H2O = ADP + phosphate + H(+). In terms of biological role, the RuvA-RuvB-RuvC complex processes Holliday junction (HJ) DNA during genetic recombination and DNA repair, while the RuvA-RuvB complex plays an important role in the rescue of blocked DNA replication forks via replication fork reversal (RFR). RuvA specifically binds to HJ cruciform DNA, conferring on it an open structure. The RuvB hexamer acts as an ATP-dependent pump, pulling dsDNA into and through the RuvAB complex. RuvB forms 2 homohexamers on either side of HJ DNA bound by 1 or 2 RuvA tetramers; 4 subunits per hexamer contact DNA at a time. Coordinated motions by a converter formed by DNA-disengaged RuvB subunits stimulates ATP hydrolysis and nucleotide exchange. Immobilization of the converter enables RuvB to convert the ATP-contained energy into a lever motion, pulling 2 nucleotides of DNA out of the RuvA tetramer per ATP hydrolyzed, thus driving DNA branch migration. The RuvB motors rotate together with the DNA substrate, which together with the progressing nucleotide cycle form the mechanistic basis for DNA recombination by continuous HJ branch migration. Branch migration allows RuvC to scan DNA until it finds its consensus sequence, where it cleaves and resolves cruciform DNA. The chain is Holliday junction branch migration complex subunit RuvB from Thiobacillus denitrificans (strain ATCC 25259 / T1).